The chain runs to 100 residues: MNLSPREKDKLLISMAAMVARRRLERGVRLNHPEAIAIISDFIVEGARDGRTVAELMQAGAEVLTREQCMDGIAEMIHDIQVEATFPDGTKLVTVHQPIR.

The protein belongs to the urease gamma subunit family. As to quaternary structure, heterotrimer of UreA (gamma), UreB (beta) and UreC (alpha) subunits. Three heterotrimers associate to form the active enzyme.

The protein resides in the cytoplasm. The catalysed reaction is urea + 2 H2O + H(+) = hydrogencarbonate + 2 NH4(+). It participates in nitrogen metabolism; urea degradation; CO(2) and NH(3) from urea (urease route): step 1/1. The protein is Urease subunit gamma of Rhodopseudomonas palustris (strain BisB5).